A 1072-amino-acid polypeptide reads, in one-letter code: Zn(2)-C6 fungal-type transcription factor FTF1a (1072 aa).

The zn(2)-C6 fungal-type DNA-binding region spans 178–205; it reads CMACRRKKIRCSGEKPACKHCLRSRILC.

It localises to the nucleus. In terms of biological role, zn(2)-C6 fungal-type transcription factor that has a role in the establishment of the fungus within the plant and/or the progress of the disease. Regulates the expression of virulence factors such as SIX1 and SIX6. The protein is Zn(2)-C6 fungal-type transcription factor FTF1a of Fusarium oxysporum f. sp. lycopersici (strain 4287 / CBS 123668 / FGSC 9935 / NRRL 34936) (Fusarium vascular wilt of tomato).